A 158-amino-acid polypeptide reads, in one-letter code: uncharacterized protein (158 aa).

The next 4 membrane-spanning stretches (helical) occupy residues 12–32, 39–59, 90–110, and 113–133; these read IITL…AVVV, LDIL…SLSV, LIYL…FNTI, and IIST…WLPL.

The protein localises to the cell membrane. This is an uncharacterized protein from Mycoplasma genitalium (strain ATCC 33530 / DSM 19775 / NCTC 10195 / G37) (Mycoplasmoides genitalium).